Reading from the N-terminus, the 317-residue chain is tRNA dimethylallyltransferase (317 aa).

Position 16-23 (16-23 (GPTASGKS)) interacts with ATP. 18–23 (TASGKS) is a substrate binding site. 3 interaction with substrate tRNA regions span residues 41–44 (DSAQ), 165–169 (QRIQR), and 247–252 (RCVGYR).

It belongs to the IPP transferase family. As to quaternary structure, monomer. Mg(2+) serves as cofactor.

The enzyme catalyses adenosine(37) in tRNA + dimethylallyl diphosphate = N(6)-dimethylallyladenosine(37) in tRNA + diphosphate. Functionally, catalyzes the transfer of a dimethylallyl group onto the adenine at position 37 in tRNAs that read codons beginning with uridine, leading to the formation of N6-(dimethylallyl)adenosine (i(6)A). The chain is tRNA dimethylallyltransferase from Nitrosomonas europaea (strain ATCC 19718 / CIP 103999 / KCTC 2705 / NBRC 14298).